We begin with the raw amino-acid sequence, 124 residues long: Small ribosomal subunit protein uS12 (124 aa).

D89 bears the 3-methylthioaspartic acid mark. The segment at L102–S124 is disordered. The segment covering N109–S124 has biased composition (basic residues).

The protein belongs to the universal ribosomal protein uS12 family. In terms of assembly, part of the 30S ribosomal subunit. Contacts proteins S8 and S17. May interact with IF1 in the 30S initiation complex.

Its function is as follows. With S4 and S5 plays an important role in translational accuracy. Functionally, interacts with and stabilizes bases of the 16S rRNA that are involved in tRNA selection in the A site and with the mRNA backbone. Located at the interface of the 30S and 50S subunits, it traverses the body of the 30S subunit contacting proteins on the other side and probably holding the rRNA structure together. The combined cluster of proteins S8, S12 and S17 appears to hold together the shoulder and platform of the 30S subunit. This Francisella philomiragia subsp. philomiragia (strain ATCC 25017 / CCUG 19701 / FSC 153 / O#319-036) protein is Small ribosomal subunit protein uS12.